We begin with the raw amino-acid sequence, 361 residues long: Mitochondrial fission regulator 2 (361 aa).

Serine 137 is subject to Phosphoserine. Disordered stretches follow at residues 191 to 286 (FIDL…VPNM) and 298 to 322 (LRPV…EWDP). Residues 219–231 (VLPPPPPPPPPPQ) show a composition bias toward pro residues. Residues 232–244 (FSLQPPSSLPMQP) show a composition bias toward low complexity. Positions 250-282 (HDIDSLATEMERQLSGVKKTDDSHHSKSQRLRD) are enriched in basic and acidic residues. 2 positions are modified to phosphoserine: serine 304 and serine 340.

It belongs to the MTFR1 family. As to expression, expressed predominantly in testis (at protein level). Expressed to a lower extent in spleen.

The protein localises to the mitochondrion. Its function is as follows. May play a role in mitochondrial aerobic respiration essentially in the testis. Can also promote mitochondrial fission. The sequence is that of Mitochondrial fission regulator 2 (Mtfr2) from Mus musculus (Mouse).